A 796-amino-acid chain; its full sequence is Protein translocase subunit SecA 2 (796 aa).

ATP is bound by residues Q84, 102 to 106 (GEGKT), and D496.

It belongs to the SecA family. As to quaternary structure, monomer and homodimer. Part of the essential Sec protein translocation apparatus which comprises SecA, SecYEG and auxiliary proteins SecDF. Other proteins may also be involved.

Its subcellular location is the cell membrane. The protein localises to the cytoplasm. It carries out the reaction ATP + H2O + cellular proteinSide 1 = ADP + phosphate + cellular proteinSide 2.. Part of the Sec protein translocase complex. Interacts with the SecYEG preprotein conducting channel. Has a central role in coupling the hydrolysis of ATP to the transfer of proteins into and across the cell membrane, serving as an ATP-driven molecular motor driving the stepwise translocation of polypeptide chains across the membrane. The sequence is that of Protein translocase subunit SecA 2 from Staphylococcus aureus (strain MSSA476).